The following is a 195-amino-acid chain: MPKVGMQPIRRQQLIEATLAAINDVGMHDASIVQIARRAGVSNGIISHYFRDKNGLLEATMRYLISHLGLAVKSRLLNLTENTPRARLRAIVQGNFDDSQTNSAAMKTWLAFWASSLHSPMLHRLQQVNDRRLYSNLSVEFSRCLPKDKARIAAKGVAGLIDGLWLRGALSHNVFNCEEALSITYDYIDQQLTHA.

Positions Pro8–Leu68 constitute an HTH tetR-type domain. Positions Ser31–Phe50 form a DNA-binding region, H-T-H motif.

The protein operates within amine and polyamine biosynthesis; betaine biosynthesis via choline pathway [regulation]. Its function is as follows. Repressor involved in the biosynthesis of the osmoprotectant glycine betaine. It represses transcription of the choline transporter BetT and the genes of BetAB involved in the synthesis of glycine betaine. The sequence is that of HTH-type transcriptional regulator BetI from Pectobacterium atrosepticum (strain SCRI 1043 / ATCC BAA-672) (Erwinia carotovora subsp. atroseptica).